A 386-amino-acid polypeptide reads, in one-letter code: Putative prophage major tail sheath protein (386 aa).

This sequence belongs to the myoviridae tail sheath protein family.

It is found in the secreted. This is Putative prophage major tail sheath protein from Pseudomonas aeruginosa (strain UCBPP-PA14).